The primary structure comprises 741 residues: Melanoma-associated antigen D4 (741 aa).

Polar residues predominate over residues 1-13 (MAEGSFSVQSESY). Disordered stretches follow at residues 1–27 (MAEGSFSVQSESYSVEDMDEGSDEVGE), 136–206 (RVAT…EGPS), 247–296 (MAFP…KALA), and 323–379 (PEGA…QPSL). The segment covering 14–27 (SVEDMDEGSDEVGE) has biased composition (acidic residues). 2 stretches are compositionally biased toward polar residues: residues 140–151 (PQVSGEDTQPTT) and 187–196 (TSAQSQTGSP). The span at 354 to 363 (DEYESSEEER) shows a compositional bias: acidic residues. Positions 413–611 (LQERANKLVK…REWKAHFLEA (199 aa)) constitute an MAGE domain. The interval 700–720 (VSSGTNGGASTSVLDGPSTSS) is disordered. Over residues 701–720 (SSGTNGGASTSVLDGPSTSS) the composition is skewed to polar residues.

Interacts with TRIM27. In terms of tissue distribution, expressed only in brain and ovary among normal tissues. Isoform 1 and isoform 2 are specifically expressed in glioma cells among cancer cells. Detected in some renal cell carcinoma samples.

Its function is as follows. May enhance ubiquitin ligase activity of RING-type zinc finger-containing E3 ubiquitin-protein ligases. Proposed to act through recruitment and/or stabilization of the Ubl-conjugating enzyme (E2) at the E3:substrate complex. In Homo sapiens (Human), this protein is Melanoma-associated antigen D4 (MAGED4).